The sequence spans 632 residues: Phospholipid:diacylglycerol acyltransferase (632 aa).

The span at 1–15 shows a compositional bias: basic residues; that stretch reads MASSKKSKTHKKKKE. A disordered region spans residues 1–47; sequence MASSKKSKTHKKKKEVKSPIDLPNSKKPTRALSEQPSASETQSVSNK. Residues 1 to 56 lie on the Cytoplasmic side of the membrane; the sequence is MASSKKSKTHKKKKEVKSPIDLPNSKKPTRALSEQPSASETQSVSNKSRKSKFGKR. Residues 32-46 show a composition bias toward polar residues; sequence LSEQPSASETQSVSN. The helical transmembrane segment at 57-77 threads the bilayer; that stretch reads LNFILGAILGICGAFFFAVGD. The Lumenal segment spans residues 78-632; the sequence is DNAVFDPATL…NEINLDKPRN (555 aa). Asp-136 is a binding site for substrate. The active-site Acyl-ester intermediate is the Ser-293. Met-294 lines the substrate pocket. Residues Asp-535 and His-586 each act as charge relay system in the active site.

The protein belongs to the AB hydrolase superfamily. Lipase family.

Its subcellular location is the endoplasmic reticulum membrane. It carries out the reaction a glycerophospholipid + a 1,2-diacyl-sn-glycerol = a monoacylglycerophospholipid + a triacyl-sn-glycerol. It participates in glycerolipid metabolism; triacylglycerol biosynthesis. In terms of biological role, catalyzes triacylglycerol (TAG) formation by an acyl-CoA independent pathway. The enzyme specifically transfers acyl groups from the sn-2 position of a phospholipid to diacylglycerol (DAG), thus forming an sn-1-lysophospholipid. Plays a major role in triacylglycerol formation at log phase. Involved in lipid particle synthesis from the endoplasmic reticulum, promoting localized TAG production at discrete ER subdomains. This chain is Phospholipid:diacylglycerol acyltransferase (plh1), found in Schizosaccharomyces pombe (strain 972 / ATCC 24843) (Fission yeast).